A 210-amino-acid polypeptide reads, in one-letter code: 3-hydroxy-3-methylglutaryl-coenzyme A reductase 2 (210 aa).

Residues K21 and D97 each act as charge relay system in the active site. The chain crosses the membrane as a helical span at residues 166-186 (LLATIVAGSVLAGELSLMSAI). H195 acts as the Proton donor in catalysis. N-linked (GlcNAc...) asparagine glycosylation occurs at N199.

This sequence belongs to the HMG-CoA reductase family.

It is found in the endoplasmic reticulum membrane. The protein localises to the mitochondrion membrane. It localises to the plastid membrane. It carries out the reaction (R)-mevalonate + 2 NADP(+) + CoA = (3S)-3-hydroxy-3-methylglutaryl-CoA + 2 NADPH + 2 H(+). It functions in the pathway metabolic intermediate biosynthesis; (R)-mevalonate biosynthesis; (R)-mevalonate from acetyl-CoA: step 3/3. In terms of biological role, catalyzes the synthesis of mevalonate. The specific precursor of all isoprenoid compounds present in plants. This is 3-hydroxy-3-methylglutaryl-coenzyme A reductase 2 (HMGR2) from Hevea brasiliensis (Para rubber tree).